A 77-amino-acid polypeptide reads, in one-letter code: Metallothionein-like protein 2 (77 aa).

Belongs to the metallothionein superfamily. Type 15 family.

Metallothioneins have a high content of cysteine residues that bind various heavy metals. The sequence is that of Metallothionein-like protein 2 (MT1A) from Trifolium repens (Creeping white clover).